Reading from the N-terminus, the 359-residue chain is NF-kappa-B inhibitor beta (359 aa).

Phosphoserine; by RPS6KA1 occurs at positions 19 and 23. ANK repeat units lie at residues 57–86 (DGDT…GTEY), 93–122 (LGQT…GVLV), 126–155 (GGHT…SHPR), 206–235 (DGHT…DLNK), 240–269 (CGRT…DPTA), and 273–302 (GGRT…PEPE). The disordered stretch occupies residues 153 to 192 (HPRDASDTYLTQSQDHTPDTSHAPVATDPQPNPGNEEELR). The span at 298-308 (APEPEDKDDKL) shows a compositional bias: basic and acidic residues. A disordered region spans residues 298-359 (APEPEDKDDK…KPLPDDPNPA (62 aa)). At Ser-318 the chain carries Phosphoserine. Over residues 318–331 (SDSDNRDEGDEYDD) the composition is skewed to acidic residues. Pro residues predominate over residues 342-359 (QPPPSPAAKPLPDDPNPA).

This sequence belongs to the NF-kappa-B inhibitor family. In terms of assembly, interacts with THRB (via ligand-binding domain). Interacts with RELA and REL. Interacts with COMMD1. Interacts with inhibitor kappa B-interacting Ras-like NKIRAS1 and NKIRAS2. Post-translationally, phosphorylated by RPS6KA1; followed by degradation. Interaction with NKIRAS1 and NKIRAS2 probably prevents phosphorylation.

It localises to the cytoplasm. The protein localises to the nucleus. Inhibits NF-kappa-B by complexing with and trapping it in the cytoplasm. However, the unphosphorylated form resynthesized after cell stimulation is able to bind NF-kappa-B allowing its transport to the nucleus and protecting it to further NFKBIA-dependent inactivation. Association with inhibitor kappa B-interacting NKIRAS1 and NKIRAS2 prevent its phosphorylation rendering it more resistant to degradation, explaining its slower degradation. The chain is NF-kappa-B inhibitor beta (Nfkbib) from Rattus norvegicus (Rat).